The following is a 61-amino-acid chain: Metallothionein-2D (61 aa).

M1 bears the N-acetylmethionine mark. The segment at 1–29 is beta; it reads MDPNCSCATRDSCACASSCKCKECKCTSC. The a divalent metal cation site is built by C5, C7, C13, C15, C19, C21, C24, C26, C29, C33, C34, C36, C37, C41, C44, C48, C50, C57, C59, and C60. Residues 30-61 form an alpha region; it reads KKSCCSCCPAGCTKCAQGCICKGASDKCSCCA.

The protein belongs to the metallothionein superfamily. Type 1 family. As to quaternary structure, monomer.

In terms of biological role, metallothioneins have a high content of cysteine residues that bind various heavy metals; these proteins are transcriptionally regulated by both heavy metals and glucocorticoids. The polypeptide is Metallothionein-2D (Oryctolagus cuniculus (Rabbit)).